A 231-amino-acid polypeptide reads, in one-letter code: Sugar fermentation stimulation protein homolog (231 aa).

This sequence belongs to the SfsA family.

The chain is Sugar fermentation stimulation protein homolog from Citrifermentans bemidjiense (strain ATCC BAA-1014 / DSM 16622 / JCM 12645 / Bem) (Geobacter bemidjiensis).